Reading from the N-terminus, the 143-residue chain is Ribonuclease HI (143 aa).

One can recognise an RNase H type-1 domain in the interval Met-1 to Gln-136. 4 residues coordinate Mg(2+): Asp-9, Glu-47, Asp-69, and Asp-128.

This sequence belongs to the RNase H family. As to quaternary structure, monomer. Requires Mg(2+) as cofactor.

The protein resides in the cytoplasm. It catalyses the reaction Endonucleolytic cleavage to 5'-phosphomonoester.. In terms of biological role, endonuclease that specifically degrades the RNA of RNA-DNA hybrids. This Helicobacter pylori (strain ATCC 700392 / 26695) (Campylobacter pylori) protein is Ribonuclease HI (rnhA).